Reading from the N-terminus, the 97-residue chain is DNA/RNA-binding protein Alba (97 aa).

Lys-15 is modified (N6-acetyllysine).

It belongs to the histone-like Alba family. Acetylated. Acetylation at Lys-15 decreases DNA-binding affinity.

It localises to the cytoplasm. It is found in the chromosome. In terms of biological role, binds double-stranded DNA tightly but without sequence specificity. Involved in DNA compaction. This Sulfolobus acidocaldarius (strain ATCC 33909 / DSM 639 / JCM 8929 / NBRC 15157 / NCIMB 11770) protein is DNA/RNA-binding protein Alba.